A 177-amino-acid polypeptide reads, in one-letter code: Protein SPMIP1 (177 aa).

Residues 47-80 form a disordered region; that stretch reads SRLPRKLPTLLPQASVAPPPPASKTTPSKAPSPA.

This is Protein SPMIP1 (Spmip1) from Mus musculus (Mouse).